Consider the following 270-residue polypeptide: tRNA pseudouridine synthase A (270 aa).

D52 functions as the Nucleophile in the catalytic mechanism. A substrate-binding site is contributed by Y110. The segment at 251–270 (TGAADEPAAPHGVTETRMQL) is disordered.

The protein belongs to the tRNA pseudouridine synthase TruA family. In terms of assembly, homodimer.

The enzyme catalyses uridine(38/39/40) in tRNA = pseudouridine(38/39/40) in tRNA. Functionally, formation of pseudouridine at positions 38, 39 and 40 in the anticodon stem and loop of transfer RNAs. This Roseiflexus sp. (strain RS-1) protein is tRNA pseudouridine synthase A.